We begin with the raw amino-acid sequence, 351 residues long: Ion-translocating oxidoreductase complex subunit D (351 aa).

4 helical membrane passes run 20 to 40 (IMLWVILACLPGMLAQVYFFG), 44 to 64 (LIQVGLASATALIAEGVTLSL), 89 to 109 (LPPLAPWWMVVMATVFAIIIA), and 123 to 143 (PAMIGYVVLLISFPVQMTSWL). Residue threonine 187 is modified to FMN phosphoryl threonine. The next 5 helical transmembrane spans lie at 215–235 (LSGIGWQWVNIGFLIGGLFLL), 244–264 (IPVSFLLSLMFCALLSWIIAP), 267–287 (FAQPMLHLLSGATMLGAFFIA), 301–321 (LIFGALIGLLVWLIRTYGGYP), and 322–342 (DGVAFAVLLANITVPLIDYYT).

Belongs to the NqrB/RnfD family. The complex is composed of six subunits: RnfA, RnfB, RnfC, RnfD, RnfE and RnfG. FMN serves as cofactor.

It is found in the cell inner membrane. Its function is as follows. Part of a membrane-bound complex that couples electron transfer with translocation of ions across the membrane. This chain is Ion-translocating oxidoreductase complex subunit D, found in Pectobacterium atrosepticum (strain SCRI 1043 / ATCC BAA-672) (Erwinia carotovora subsp. atroseptica).